The primary structure comprises 340 residues: Chitinase 2 (340 aa).

The N-terminal stretch at 1–32 (MSTPRAAASLAKKAALVALAVLAAALATAARA) is a signal peptide. In terms of domain architecture, Chitin-binding type-1 spans 33-73 (EQCGAQAGGARCPNCLCCSRWGWCGTTSDFCGDGCQSQCSG). Disulfide bonds link Cys35–Cys50, Cys44–Cys56, Cys47–Cys74, Cys49–Cys63, Cys67–Cys71, Cys110–Cys172, Cys184–Cys192, and Cys291–Cys323. Glu154 acts as the Proton donor in catalysis.

This sequence belongs to the glycosyl hydrolase 19 family. Chitinase class I subfamily. Expressed in roots, sheaths and meristems.

The catalysed reaction is Random endo-hydrolysis of N-acetyl-beta-D-glucosaminide (1-&gt;4)-beta-linkages in chitin and chitodextrins.. Functionally, hydrolyzes chitin and plays a role in defense against fungal pathogens containing chitin. Its overexpression confers enhanced resistance to sheath blight pathogen (R.solani). This chain is Chitinase 2 (Cht2), found in Oryza sativa subsp. japonica (Rice).